Here is a 474-residue protein sequence, read N- to C-terminus: tRNA-2-methylthio-N(6)-dimethylallyladenosine synthase (474 aa).

The region spanning 3 to 120 (KKLHIKTWGC…LPEMLNHVQG (118 aa)) is the MTTase N-terminal domain. The [4Fe-4S] cluster site is built by Cys12, Cys49, Cys83, Cys157, Cys161, and Cys164. Positions 143–375 (RAEGPTAFVS…QDRINQQVLQ (233 aa)) constitute a Radical SAM core domain. The region spanning 378-441 (RRMLGTVQRI…TNSLRGTVVR (64 aa)) is the TRAM domain.

Belongs to the methylthiotransferase family. MiaB subfamily. In terms of assembly, monomer. The cofactor is [4Fe-4S] cluster.

It is found in the cytoplasm. The catalysed reaction is N(6)-dimethylallyladenosine(37) in tRNA + (sulfur carrier)-SH + AH2 + 2 S-adenosyl-L-methionine = 2-methylsulfanyl-N(6)-dimethylallyladenosine(37) in tRNA + (sulfur carrier)-H + 5'-deoxyadenosine + L-methionine + A + S-adenosyl-L-homocysteine + 2 H(+). Catalyzes the methylthiolation of N6-(dimethylallyl)adenosine (i(6)A), leading to the formation of 2-methylthio-N6-(dimethylallyl)adenosine (ms(2)i(6)A) at position 37 in tRNAs that read codons beginning with uridine. The polypeptide is tRNA-2-methylthio-N(6)-dimethylallyladenosine synthase (Serratia proteamaculans (strain 568)).